A 139-amino-acid chain; its full sequence is ATP synthase epsilon chain (139 aa).

This sequence belongs to the ATPase epsilon chain family. F-type ATPases have 2 components, CF(1) - the catalytic core - and CF(0) - the membrane proton channel. CF(1) has five subunits: alpha(3), beta(3), gamma(1), delta(1), epsilon(1). CF(0) has three main subunits: a, b and c.

The protein localises to the cell membrane. In terms of biological role, produces ATP from ADP in the presence of a proton gradient across the membrane. The polypeptide is ATP synthase epsilon chain (Ligilactobacillus salivarius (strain UCC118) (Lactobacillus salivarius)).